The primary structure comprises 539 residues: Beta-apo-4'-carotenal oxygenase (539 aa).

Residues glutamate 228 and cysteine 262 contribute to the active site.

This sequence belongs to the aldehyde dehydrogenase family.

It carries out the reaction 4'-apo-beta-carotenal + NAD(+) + H2O = neurosporaxanthin + NADH + 2 H(+). Beta-apo-4'-carotenal oxygenase involved in the last step of synthesis of neurosporaxanthin, a carboxylic apocarotenoid acting as an essential protective pigments and leading to orange pigmentation. Converts the aldehyde beta-apo-4'-carotenal into neurosporaxanthin. Is also able to use shorter apocarotenals as substrates (such as beta-apo-8'-carotenal (C30), beta-apo-10'-carotenal (C27), or the acyclic apocarotenal apo-8'-lycopenal (C30)), indicating wide substrate specificity. Neurosporaxanthin is synthesized from geranyl-geranyl pyrophosphate (GGPP) through several enzymatic activities. Phytoene synthase activity performed by the bifunctional enzyme carAR first produces phytoene from geranyl-geranyl pyrophosphate (GGPP). The phytoene dehydrogenase carB then introduces 4 desaturations to lead to lycopene which is substrate of the carotene cyclase activity of carAR that leads to the production of gamma-carotene. CarB then performs a 5th desaturation reaction to yield torulene. Torulene is the substrate of the dioxidase carT that breaks the molecule, removing five carbon atoms to yield beta-apo-4'-carotenal, whereas the aldehyde dehydrogenase carD mediates the last step by converting beta-apo-4'-carotenal into neurosporaxanthin. In Gibberella fujikuroi (strain CBS 195.34 / IMI 58289 / NRRL A-6831) (Bakanae and foot rot disease fungus), this protein is Beta-apo-4'-carotenal oxygenase.